The following is a 196-amino-acid chain: Ribonuclease HII (196 aa).

The RNase H type-2 domain occupies 9–196 (NLIAGVDEVG…APVKRALNLV (188 aa)). Positions 15, 16, and 107 each coordinate a divalent metal cation.

The protein belongs to the RNase HII family. Mn(2+) is required as a cofactor. Requires Mg(2+) as cofactor.

The protein resides in the cytoplasm. It catalyses the reaction Endonucleolytic cleavage to 5'-phosphomonoester.. Endonuclease that specifically degrades the RNA of RNA-DNA hybrids. The chain is Ribonuclease HII from Proteus mirabilis (strain HI4320).